Consider the following 288-residue polypeptide: Probable ketoamine kinase PM0587 (288 aa).

92–94 (EAL) contributes to the ATP binding site.

It belongs to the fructosamine kinase family.

In terms of biological role, ketoamine kinase that phosphorylates ketoamines on the third carbon of the sugar moiety to generate ketoamine 3-phosphate. The polypeptide is Probable ketoamine kinase PM0587 (Pasteurella multocida (strain Pm70)).